Reading from the N-terminus, the 458-residue chain is Tetracycline resistance protein (458 aa).

Helical transmembrane passes span His-12–Leu-33, Leu-81–His-100, Phe-111–Ala-129, Ala-140–Val-162, Tyr-165–Leu-185, Met-201–Tyr-221, Phe-223–Ile-240, Val-256–Val-276, Gly-297–Val-317, Tyr-324–Ile-344, Ala-346–Thr-365, and Met-432–Tyr-451.

It belongs to the major facilitator superfamily. TCR/Tet family.

Its subcellular location is the cell membrane. In terms of biological role, resistance to tetracycline by an active tetracycline efflux. This is an energy-dependent process that decreases the accumulation of the antibiotic in whole cells. This protein functions as a metal-tetracycline/H(+) antiporter. The polypeptide is Tetracycline resistance protein (tetB) (Bacillus subtilis (strain 168)).